Here is a 451-residue protein sequence, read N- to C-terminus: Alpha-galactosidase (451 aa).

Residue 5 to 71 (PKITFIGAGS…ASGKITCHTQ (67 aa)) participates in NAD(+) binding. Asparagine 151 contacts substrate. Cysteine 173 serves as a coordination point for Mn(2+). Histidine 174 functions as the Proton donor in the catalytic mechanism. Histidine 203 contributes to the Mn(2+) binding site. Arginine 287 contributes to the substrate binding site.

Belongs to the glycosyl hydrolase 4 family. As to quaternary structure, homodimer. NAD(+) serves as cofactor. The cofactor is Mn(2+).

The catalysed reaction is Hydrolysis of terminal, non-reducing alpha-D-galactose residues in alpha-D-galactosides, including galactose oligosaccharides, galactomannans and galactolipids.. The protein is Alpha-galactosidase (melA) of Escherichia coli (strain K12).